A 410-amino-acid polypeptide reads, in one-letter code: 3-phenylpropionate/cinnamic acid dioxygenase ferredoxin--NAD(+) reductase component (410 aa).

5-36 (TIIIVGGGQAAAMAAASLRQQGFTGELHLFSD) is an FAD binding site. Residue 146–184 (SVVIVGAGTIGLELAASATQRSAAQRSAAQRRCKVTVIE) participates in NAD(+) binding.

The protein belongs to the bacterial ring-hydroxylating dioxygenase ferredoxin reductase family. As to quaternary structure, this dioxygenase system consists of four proteins: the two subunits of the hydroxylase component (HcaE and HcaF), a ferredoxin (HcaC) and a ferredoxin reductase (HcaD). It depends on FAD as a cofactor.

The catalysed reaction is 2 reduced [2Fe-2S]-[ferredoxin] + NAD(+) + H(+) = 2 oxidized [2Fe-2S]-[ferredoxin] + NADH. The protein operates within aromatic compound metabolism; 3-phenylpropanoate degradation. Functionally, part of the multicomponent 3-phenylpropionate dioxygenase, that converts 3-phenylpropionic acid (PP) and cinnamic acid (CI) into 3-phenylpropionate-dihydrodiol (PP-dihydrodiol) and cinnamic acid-dihydrodiol (CI-dihydrodiol), respectively. This Shigella flexneri serotype 5b (strain 8401) protein is 3-phenylpropionate/cinnamic acid dioxygenase ferredoxin--NAD(+) reductase component.